Here is a 402-residue protein sequence, read N- to C-terminus: Advanced glycosylation end product-specific receptor (402 aa).

A signal peptide spans 1 to 22; it reads MPTGTVARAWVLVLALWGAVAG. The Ig-like V-type domain maps to 23 to 109; it reads GQNITARIGE…ATNRLGKEVK (87 aa). At 23–341 the chain is on the extracellular side; sequence GQNITARIGE…DGSGLGTLAL (319 aa). Residues N25 and N80 are each glycosylated (N-linked (GlcNAc...) asparagine). Intrachain disulfides connect C38/C98 and C143/C206. Ig-like C2-type domains follow at residues 123–219 and 233–315; these read PEIV…RPLN and PEGI…PPVN. Residues 342–362 traverse the membrane as a helical segment; sequence ALGILGGLGIAALLIGAILWR. Topologically, residues 363–402 are cytoplasmic; that stretch reads KRQPRLEERKAPESQEDEEERAELNQSEEAEMPENGAGGP. Residues 368–402 are disordered; that stretch reads LEERKAPESQEDEEERAELNQSEEAEMPENGAGGP. Phosphoserine occurs at positions 376 and 389. Positions 376-394 are enriched in acidic residues; sequence SQEDEEERAELNQSEEAEM.

As to quaternary structure, constitutive homodimer; disulfide-linked. Forms homooligomers. Interacts with S100A1 and APP. Interacts with S100B, S100A12 and S100A14. Interacts with TIRAP. Interacts with HMGB1. Interacts with LGP2; this interaction plays an important role in AGER-mediated pro-inflammatory responses and cytokine release. Interacts with double-strand break repair protein MRE11 which is a core component of the MRN complex; the interaction enhances MRE11 endonuclease activity and promotes DNA repair. Interacts with the MCM2-7 complex via interaction with complex member MCM2; the interaction is increased following DNA replication stress and stabilizes the MCM2-7 complex at replication forks. Phosphorylated on its cytoplasmic domain by PKCzeta/PRKCZ upon ligand binding. Phosphorylated by ATM following DNA damage. Post-translationally, targeted by the ubiquitin E3 ligase subunit FBXO10 to mediate its ubiquitination and degradation. As to expression, endothelial cells and cardiomyocytes. Expressed in brain.

It is found in the cell membrane. Its subcellular location is the cell projection. The protein localises to the phagocytic cup. It localises to the early endosome. The protein resides in the nucleus. Cell surface pattern recognition receptor that senses endogenous stress signals with a broad ligand repertoire including advanced glycation end products, S100 proteins, high-mobility group box 1 protein/HMGB1, amyloid beta/APP oligomers, nucleic acids, histones, phospholipids and glycosaminoglycans. Advanced glycosylation end products are nonenzymatically glycosylated proteins which accumulate in vascular tissue in aging and at an accelerated rate in diabetes. These ligands accumulate at inflammatory sites during the pathogenesis of various diseases including diabetes, vascular complications, neurodegenerative disorders and cancers, and RAGE transduces their binding into pro-inflammatory responses. Upon ligand binding, uses TIRAP and MYD88 as adapters to transduce the signal ultimately leading to the induction of inflammatory cytokines IL6, IL8 and TNFalpha through activation of NF-kappa-B. Interaction with S100A12 on endothelium, mononuclear phagocytes, and lymphocytes triggers cellular activation, with generation of key pro-inflammatory mediators. Interaction with S100B after myocardial infarction may play a role in myocyte apoptosis by activating ERK1/2 and p53/TP53 signaling. Contributes to the translocation of amyloid-beta peptide (ABPP) across the cell membrane from the extracellular to the intracellular space in cortical neurons. ABPP-initiated RAGE signaling, especially stimulation of p38 mitogen-activated protein kinase (MAPK), has the capacity to drive a transport system delivering ABPP as a complex with RAGE to the intraneuronal space. Participates in endothelial albumin transcytosis together with HMGB1 through the RAGE/SRC/Caveolin-1 pathway, leading to endothelial hyperpermeability. Mediates the loading of HMGB1 in extracellular vesicles (EVs) that shuttle HMGB1 to hepatocytes by transferrin-mediated endocytosis and subsequently promote hepatocyte pyroptosis by activating the NLRP3 inflammasome. Binds to DNA and promotes extracellular hypomethylated DNA (CpG DNA) uptake by cells via the endosomal route to activate inflammatory responses. Mediates phagocytosis by non-professional phagocytes (NPP) and this is enhanced by binding to ligands including RNA, DNA, HMGB1 and histones. Promotes NPP-mediated phagocytosis of Saccharomyces cerevisiae spores by binding to RNA attached to the spore wall. Also promotes NPP-mediated phagocytosis of apoptotic cells. Following DNA damage, recruited to DNA double-strand break sites where it colocalizes with the MRN repair complex via interaction with double-strand break repair protein MRE11. Enhances the endonuclease activity of MRE11, promoting the end resection of damaged DNA. Promotes DNA damage repair in trophoblasts which enhances trophoblast invasion and contributes to placental development and maintenance. Protects cells from DNA replication stress by localizing to damaged replication forks where it stabilizes the MCM2-7 complex and promotes faithful progression of the replication fork. The protein is Advanced glycosylation end product-specific receptor (Ager) of Rattus norvegicus (Rat).